Reading from the N-terminus, the 296-residue chain is 4-diphosphocytidyl-2-C-methyl-D-erythritol kinase (296 aa).

K11 is a catalytic residue. ATP is bound at residue 96-106 (PVSSGLAGGSA). The active site involves D136.

Belongs to the GHMP kinase family. IspE subfamily.

It catalyses the reaction 4-CDP-2-C-methyl-D-erythritol + ATP = 4-CDP-2-C-methyl-D-erythritol 2-phosphate + ADP + H(+). The protein operates within isoprenoid biosynthesis; isopentenyl diphosphate biosynthesis via DXP pathway; isopentenyl diphosphate from 1-deoxy-D-xylulose 5-phosphate: step 3/6. In terms of biological role, catalyzes the phosphorylation of the position 2 hydroxy group of 4-diphosphocytidyl-2C-methyl-D-erythritol. The sequence is that of 4-diphosphocytidyl-2-C-methyl-D-erythritol kinase from Anaplasma phagocytophilum (strain HZ).